The sequence spans 368 residues: Histidinol-phosphate aminotransferase (368 aa).

Lys228 is subject to N6-(pyridoxal phosphate)lysine.

The protein belongs to the class-II pyridoxal-phosphate-dependent aminotransferase family. Histidinol-phosphate aminotransferase subfamily. As to quaternary structure, homodimer. Pyridoxal 5'-phosphate is required as a cofactor.

The enzyme catalyses L-histidinol phosphate + 2-oxoglutarate = 3-(imidazol-4-yl)-2-oxopropyl phosphate + L-glutamate. Its pathway is amino-acid biosynthesis; L-histidine biosynthesis; L-histidine from 5-phospho-alpha-D-ribose 1-diphosphate: step 7/9. The protein is Histidinol-phosphate aminotransferase (hisC) of Methylobacillus flagellatus.